Here is a 700-residue protein sequence, read N- to C-terminus: Tectonic-2 (700 aa).

An N-terminal signal peptide occupies residues 1–25; that stretch reads MGSLSPLSFLWGLLLLQGVLRPLRG. At 26–665 the chain is on the extracellular side; sequence DPVFIPPFIR…YYQGEPRPQC (640 aa). Asparagine 76, asparagine 82, asparagine 146, asparagine 156, and asparagine 389 each carry an N-linked (GlcNAc...) asparagine glycan. A helical transmembrane segment spans residues 666–682; sequence VAKGLMLLSLLMLAILL. Topologically, residues 683-700 are cytoplasmic; that stretch reads RHPWVGMCKAWSSASIQH.

The protein belongs to the tectonic family. In terms of assembly, part of the tectonic-like complex (also named B9 complex).

The protein localises to the membrane. The protein resides in the cytoplasm. It is found in the cytoskeleton. It localises to the cilium basal body. Functionally, component of the tectonic-like complex, a complex localized at the transition zone of primary cilia and acting as a barrier that prevents diffusion of transmembrane proteins between the cilia and plasma membranes. Required for hedgehog signaling transduction. This chain is Tectonic-2 (Tctn2), found in Rattus norvegicus (Rat).